The sequence spans 157 residues: Small ribosomal subunit protein uS7 (157 aa).

Belongs to the universal ribosomal protein uS7 family. As to quaternary structure, part of the 30S ribosomal subunit. Contacts proteins S9 and S11.

Its function is as follows. One of the primary rRNA binding proteins, it binds directly to 16S rRNA where it nucleates assembly of the head domain of the 30S subunit. Is located at the subunit interface close to the decoding center, probably blocks exit of the E-site tRNA. In Caulobacter vibrioides (strain ATCC 19089 / CIP 103742 / CB 15) (Caulobacter crescentus), this protein is Small ribosomal subunit protein uS7.